We begin with the raw amino-acid sequence, 532 residues long: Bifunctional purine biosynthesis protein PurH (532 aa).

The region spanning 1–148 (MQTPKPIKRA…KNHKDVTIVV (148 aa)) is the MGS-like domain.

This sequence belongs to the PurH family.

The catalysed reaction is (6R)-10-formyltetrahydrofolate + 5-amino-1-(5-phospho-beta-D-ribosyl)imidazole-4-carboxamide = 5-formamido-1-(5-phospho-D-ribosyl)imidazole-4-carboxamide + (6S)-5,6,7,8-tetrahydrofolate. It carries out the reaction IMP + H2O = 5-formamido-1-(5-phospho-D-ribosyl)imidazole-4-carboxamide. Its pathway is purine metabolism; IMP biosynthesis via de novo pathway; 5-formamido-1-(5-phospho-D-ribosyl)imidazole-4-carboxamide from 5-amino-1-(5-phospho-D-ribosyl)imidazole-4-carboxamide (10-formyl THF route): step 1/1. It participates in purine metabolism; IMP biosynthesis via de novo pathway; IMP from 5-formamido-1-(5-phospho-D-ribosyl)imidazole-4-carboxamide: step 1/1. The protein is Bifunctional purine biosynthesis protein PurH of Alteromonas mediterranea (strain DSM 17117 / CIP 110805 / LMG 28347 / Deep ecotype).